Here is a 1401-residue protein sequence, read N- to C-terminus: DNA-directed RNA polymerase subunit beta (1401 aa).

The protein belongs to the RNA polymerase beta chain family. In terms of assembly, the RNAP catalytic core consists of 2 alpha, 1 beta, 1 beta' and 1 omega subunit. When a sigma factor is associated with the core the holoenzyme is formed, which can initiate transcription.

It carries out the reaction RNA(n) + a ribonucleoside 5'-triphosphate = RNA(n+1) + diphosphate. DNA-dependent RNA polymerase catalyzes the transcription of DNA into RNA using the four ribonucleoside triphosphates as substrates. In Desulforapulum autotrophicum (strain ATCC 43914 / DSM 3382 / VKM B-1955 / HRM2) (Desulfobacterium autotrophicum), this protein is DNA-directed RNA polymerase subunit beta.